The chain runs to 596 residues: Chloride intracellular channel protein 6 (596 aa).

The tract at residues 1 to 360 (MAEATEPKEV…ALEEGDPGQE (360 aa)) is disordered. A compositionally biased stretch (basic and acidic residues) spans 34–48 (LEGREASEEAAEAPR). Ser40 bears the Phosphoserine mark. Positions 65–74 (GCGQDEGTGG) are enriched in gly residues. Residues 83–98 (GPEAETPGASGAPGEA) are compositionally biased toward low complexity. Over residues 118 to 130 (SAQQVQGMSSGLD) the composition is skewed to polar residues. The segment covering 148–160 (DPTASEAGEEAES) has biased composition (acidic residues). Composition is skewed to low complexity over residues 197 to 213 (GSES…PQPQ) and 225 to 244 (GGNE…AGEG). The segment covering 246 to 290 (TLGKDGSEEAASEDARVDAHENGDQGKLQEETGEEEARPEPELKG) has biased composition (basic and acidic residues). Residue Ser304 is modified to Phosphoserine. A compositionally biased stretch (basic and acidic residues) spans 338–348 (ELGRVNGRREN). The short motif at 379 to 382 (CPFS) is the G-site element. The chain crosses the membrane as a helical span at residues 381-401 (FSQRLFMILWLKGVIFNVTTV). The GST C-terminal domain occupies 425 to 596 (DGEVKTDVNK…AYSDAAKRMK (172 aa)).

This sequence belongs to the chloride channel CLIC family. In terms of assembly, monomer (soluble state). Interacts with dopamine receptors DRD2, DRD3 and DRD4. Phosphorylated.

It is found in the cytoplasm. The protein resides in the cell membrane. It catalyses the reaction chloride(in) = chloride(out). Its activity is regulated as follows. Channel activity is redox- and pH-regulated. Inhibited by IAA-94. Functionally, in the soluble state, catalyzes glutaredoxin-like thiol disulfide exchange reactions with reduced glutathione as electron donor. Can insert into membranes and form voltage-dependent chloride-selective channels. The channel opens upon membrane depolarization at positive voltages and closes at negative membrane voltages. May play a critical role in water-secreting cells, possibly through the regulation of chloride ion transport. The sequence is that of Chloride intracellular channel protein 6 (Clic6) from Mus musculus (Mouse).